Here is a 62-residue protein sequence, read N- to C-terminus: Large ribosomal subunit protein bL28 (62 aa).

The interval 1-23 (MGKQCYVTGRKASTGNRRSHALN) is disordered.

Belongs to the bacterial ribosomal protein bL28 family.

The protein is Large ribosomal subunit protein bL28 of Staphylococcus carnosus (strain TM300).